Here is a 213-residue protein sequence, read N- to C-terminus: Probable thiopurine S-methyltransferase (213 aa).

S-adenosyl-L-methionine-binding residues include Trp-10, Leu-45, Glu-66, and Arg-125.

This sequence belongs to the class I-like SAM-binding methyltransferase superfamily. TPMT family.

It localises to the cytoplasm. The enzyme catalyses S-adenosyl-L-methionine + a thiopurine = S-adenosyl-L-homocysteine + a thiopurine S-methylether.. This chain is Probable thiopurine S-methyltransferase, found in Yarrowia lipolytica (strain CLIB 122 / E 150) (Yeast).